A 239-amino-acid chain; its full sequence is UDP-2,3-diacylglucosamine hydrolase (239 aa).

5 residues coordinate Mn(2+): D8, H10, D41, N79, and H114. A substrate-binding site is contributed by 79 to 80 (NR). Residues D122, S160, N164, K167, and H195 each coordinate substrate. Mn(2+)-binding residues include H195 and H197.

The protein belongs to the LpxH family. Mn(2+) serves as cofactor.

The protein localises to the cell inner membrane. The catalysed reaction is UDP-2-N,3-O-bis[(3R)-3-hydroxytetradecanoyl]-alpha-D-glucosamine + H2O = 2-N,3-O-bis[(3R)-3-hydroxytetradecanoyl]-alpha-D-glucosaminyl 1-phosphate + UMP + 2 H(+). Its pathway is glycolipid biosynthesis; lipid IV(A) biosynthesis; lipid IV(A) from (3R)-3-hydroxytetradecanoyl-[acyl-carrier-protein] and UDP-N-acetyl-alpha-D-glucosamine: step 4/6. Functionally, hydrolyzes the pyrophosphate bond of UDP-2,3-diacylglucosamine to yield 2,3-diacylglucosamine 1-phosphate (lipid X) and UMP by catalyzing the attack of water at the alpha-P atom. Involved in the biosynthesis of lipid A, a phosphorylated glycolipid that anchors the lipopolysaccharide to the outer membrane of the cell. The polypeptide is UDP-2,3-diacylglucosamine hydrolase (Sodalis glossinidius (strain morsitans)).